The following is a 344-amino-acid chain: Beta-1,4-galactosyltransferase 4 (344 aa).

Topologically, residues 1–12 (MGCNPPYHLSYR) are cytoplasmic. Residues 13-38 (LRLLLLFTLCLTVVGWATSNYFVGAI) traverse the membrane as a helical; Signal-anchor for type II membrane protein segment. The Lumenal segment spans residues 39–344 (QVIPKAKDFM…NITVDFWTAA (306 aa)). A disulfide bridge links C77 with C118. UDP-alpha-D-galactose-binding positions include 129–133 (PHRNR), 168–170 (FNR), and 195–196 (VD). An intrachain disulfide couples C189 to C208. D196 contributes to the Mn(2+) binding site. N220 carries N-linked (GlcNAc...) asparagine glycosylation. Y224 and W256 together coordinate UDP-alpha-D-galactose. 258–261 (GEDD) is a binding site for N-acetyl-D-glucosamine. Mn(2+) is bound at residue H289. 289–291 (HTR) serves as a coordination point for UDP-alpha-D-galactose. R301 is an N-acetyl-D-glucosamine binding site. N335 is a glycosylation site (N-linked (GlcNAc...) asparagine).

Belongs to the glycosyltransferase 7 family. As to quaternary structure, interacts with SLC35A2/UGT1. The cofactor is Mn(2+).

Its subcellular location is the golgi apparatus membrane. The protein resides in the secreted. It carries out the reaction N-acetyl-D-glucosamine + UDP-alpha-D-galactose = beta-D-galactosyl-(1-&gt;4)-N-acetyl-D-glucosamine + UDP + H(+). The catalysed reaction is a beta-D-GlcNAc-(1-&gt;3)-beta-D-Gal-(1-&gt;4)-beta-D-Glc-(1&lt;-&gt;1)-Cer(d18:1(4E)) + UDP-alpha-D-galactose = a neolactoside nLc4Cer(d18:1(4E)) + UDP + H(+). The enzyme catalyses 3-O-{beta-D-galactosyl-(1-&gt;3)-[6-O-sulfo-N-acetyl-beta-D-glucosaminyl-(1-&gt;6)]-N-acetyl-alpha-D-galactosaminyl}-L-seryl-[protein] + UDP-alpha-D-galactose = 3-O-{beta-D-galactosyl-(1-&gt;3)-[beta-D-galactosyl-(1-&gt;4)-6-O-sulfo-N-acetyl-beta-D-glucosaminyl-(1-&gt;6)]-N-acetyl-alpha-D-galactosaminyl}-L-seryl-[protein] + UDP + H(+). It catalyses the reaction 3-O-{beta-D-galactosyl-(1-&gt;3)-[6-O-sulfo-N-acetyl-beta-D-glucosaminyl-(1-&gt;6)]-N-acetyl-alpha-D-galactosaminyl}-L-threonyl-[protein] + UDP-alpha-D-galactose = 3-O-{beta-D-galactosyl-(1-&gt;3)-[beta-D-galactosyl-(1-&gt;4)-6-O-sulfo-N-acetyl-beta-D-glucosaminyl-(1-&gt;6)]-N-acetyl-alpha-D-galactosaminyl}-L-threonyl-[protein] + UDP + H(+). The protein operates within protein modification; protein glycosylation. It functions in the pathway glycolipid biosynthesis. Functionally, galactose (Gal) transferase involved in the synthesis of terminal N-acetyllactosamine (LacNac) unit present on glycan chains of glycoproteins and glycosphingolipids. Catalyzes the transfer of Gal residue via a beta1-&gt;4 linkage from UDP-Gal to the non-reducing terminal N-acetyl glucosamine 6-O-sulfate (6-O-sulfoGlcNAc) in the linearly growing chain of both N- and O-linked keratan sulfate proteoglycans. Cooperates with B3GNT7 N-acetyl glucosamine transferase and CHST6 and CHST1 sulfotransferases to construct and elongate mono- and disulfated disaccharide units [-&gt;3Galbeta1-&gt;4(6-sulfoGlcNAcbeta)1-&gt;] and [-&gt;3(6-sulfoGalbeta)1-&gt;4(6-sulfoGlcNAcbeta)1-&gt;] within keratan sulfate polymer. Transfers Gal residue via a beta1-&gt;4 linkage to terminal 6-O-sulfoGlcNAc within the LacNac unit of core 2 O-glycans forming 6-sulfo-sialyl-Lewis X (sLex). May contribute to the generation of sLex epitope on mucin-type glycoproteins that serve as ligands for SELL/L-selectin, a major regulator of leukocyte migration. In the biosynthesis pathway of neolacto-series glycosphingolipids, transfers Gal residue via a beta1-&gt;4 linkage to terminal GlcNAc of a lactotriaosylceramide (Lc3Cer) acceptor to form a neolactotetraosylceramide. In Mus musculus (Mouse), this protein is Beta-1,4-galactosyltransferase 4.